A 90-amino-acid polypeptide reads, in one-letter code: Guanine nucleotide-binding protein subunit gamma (90 aa).

A lipid anchor (S-palmitoyl cysteine) is attached at Cys-86. Cysteine methyl ester is present on Cys-87. A lipid anchor (S-farnesyl cysteine) is attached at Cys-87. Positions 88–90 are cleaved as a propeptide — removed in mature form; it reads TIM.

This sequence belongs to the G protein gamma family. In terms of assembly, g proteins are composed of 3 units, alpha, beta and gamma.

It localises to the membrane. The chain is Guanine nucleotide-binding protein subunit gamma from Kluyveromyces lactis (strain ATCC 8585 / CBS 2359 / DSM 70799 / NBRC 1267 / NRRL Y-1140 / WM37) (Yeast).